The primary structure comprises 247 residues: MRILLSNDDGYFAPGIANLAKVLLEIADVTVVAPERDRSGASNSLTLDRPLSLHKSHNGFYYVNGTPTDCVHLAVTGMLDELPDMVISGINDGANMGDDTVYSGTVAAATEGFLLGLPSIAVSLVSMSRGNFPTAARIVVDLVKRFTENRFHIPILLNVNVPDVPYDELQGVEVTRLGRRHKAESVIKYQTPRGETVYWVGAAGAAQDAGEGTDFFALQNNRVSITPLQIDLTRYDQIGYVKNWLTL.

A divalent metal cation-binding residues include D8, D9, S39, and N91.

This sequence belongs to the SurE nucleotidase family. A divalent metal cation serves as cofactor.

It localises to the cytoplasm. The enzyme catalyses a ribonucleoside 5'-phosphate + H2O = a ribonucleoside + phosphate. Nucleotidase that shows phosphatase activity on nucleoside 5'-monophosphates. This chain is 5'-nucleotidase SurE, found in Nitrosomonas europaea (strain ATCC 19718 / CIP 103999 / KCTC 2705 / NBRC 14298).